The following is a 286-amino-acid chain: L-rhamnose-binding lectin CSL1 (286 aa).

SUEL-type lectin domains follow at residues 96–186 (TTCE…YICL) and 193–280 (TCEG…YTCL).

Its function is as follows. L-rhamnose binding lectin. Has hemagglutinating activity towards rabbit erythrocytes, but not human type B erythrocytes. Hemagglutinating activity is inhibited by smooth-type lipopolysaccharide (LPS) from K.pneumoniae, E.coli K-235, S.flexneri 1A, A.salmonicida and S.minnesota and rough-type LPS from S.flexneri, but not by rough-type LPS from E.coli K12 and E.coli EH100. Agglutinates E.coli K12 and B.subtilis. In Oncorhynchus keta (Chum salmon), this protein is L-rhamnose-binding lectin CSL1.